The chain runs to 64 residues: Putative antitoxin VapB51 (64 aa).

Possibly the antitoxin component of a type II toxin-antitoxin (TA) system. Its cognate toxin is VapC51. This chain is Putative antitoxin VapB51, found in Mycobacterium tuberculosis (strain ATCC 25618 / H37Rv).